Consider the following 979-residue polypeptide: Glucose transport transcription regulator RGT1 (979 aa).

Composition is skewed to basic and acidic residues over residues 1–14 (MSAS…KEAE), 36–47 (DQCREKKTRCDF), and 105–114 (FKGDAGRPRA). 6 disordered regions span residues 1–47 (MSAS…RCDF), 65–142 (TFER…LAPG), 165–219 (IDSL…EDCR), 249–380 (LPQQ…SIES), 563–590 (DTEA…GKSA), and 926–954 (APES…NTSL). The zn(2)-C6 fungal-type DNA-binding region spans 35-64 (CDQCREKKTRCDFSDERPICSACQRMGKTC). Positions 132 to 142 (QPRLQPLLAPG) are enriched in low complexity. 2 stretches are compositionally biased toward polar residues: residues 170-179 (SDVSNRNGSE) and 186-207 (SNAS…SQLP). Over residues 251–263 (QQQQQQQQQNAQQ) the composition is skewed to low complexity. Residues 280-295 (EHFKEFDEGFHSRKGS) are compositionally biased toward basic and acidic residues. A compositionally biased stretch (low complexity) spans 296–309 (DVSVAVSPSSPVQV). The segment covering 310 to 329 (TRTQQAGLNSESRDTNTATA) has biased composition (polar residues). Residues 358–368 (GPRKQKRKNSN) show a composition bias toward basic residues. Positions 369 to 380 (RNKPGSQSSIES) are enriched in low complexity. The segment covering 565-574 (EASENEDEAG) has biased composition (acidic residues). Over residues 942–953 (PGPNSDGSNNTS) the composition is skewed to low complexity.

This sequence belongs to the EDS1/RGT1 family.

Its subcellular location is the nucleus. The protein localises to the cytoplasm. Glucose-responsive transcription factor that regulates expression of several glucose transporter (HXT) genes in response to glucose. In the absence of glucose, it functions as a transcriptional repressor, whereas high concentrations of glucose cause it to function as a transcriptional activator. In cells growing on low levels of glucose, has a neutral role, neither repressing nor activating transcription. In Lachancea thermotolerans (strain ATCC 56472 / CBS 6340 / NRRL Y-8284) (Yeast), this protein is Glucose transport transcription regulator RGT1 (RGT1).